The primary structure comprises 609 residues: DNA mismatch repair protein MutL (609 aa).

A disordered region spans residues 364–386 (SVNSKPTDYRPAMSPSFKSTPNT).

The protein belongs to the DNA mismatch repair MutL/HexB family.

In terms of biological role, this protein is involved in the repair of mismatches in DNA. It is required for dam-dependent methyl-directed DNA mismatch repair. May act as a 'molecular matchmaker', a protein that promotes the formation of a stable complex between two or more DNA-binding proteins in an ATP-dependent manner without itself being part of a final effector complex. The sequence is that of DNA mismatch repair protein MutL from Rickettsia akari (strain Hartford).